The following is a 91-amino-acid chain: uncharacterized protein (91 aa).

The signal sequence occupies residues 1–21 (MKIISKMLVGALALAVTNVYA).

Belongs to the BhsA/McbA family.

It is found in the periplasm. This is an uncharacterized protein from Escherichia coli (strain K12).